The chain runs to 505 residues: Histidine--tRNA ligase (505 aa).

Belongs to the class-II aminoacyl-tRNA synthetase family. In terms of assembly, homodimer.

It is found in the cytoplasm. It carries out the reaction tRNA(His) + L-histidine + ATP = L-histidyl-tRNA(His) + AMP + diphosphate + H(+). This is Histidine--tRNA ligase from Jannaschia sp. (strain CCS1).